The chain runs to 92 residues: Small ribosomal subunit protein bS18 (92 aa).

A disordered region spans residues 1–22 (MADERAPQRSTSGPRKKRPFQR).

Belongs to the bacterial ribosomal protein bS18 family. As to quaternary structure, part of the 30S ribosomal subunit. Forms a tight heterodimer with protein bS6.

Its function is as follows. Binds as a heterodimer with protein bS6 to the central domain of the 16S rRNA, where it helps stabilize the platform of the 30S subunit. This Citrifermentans bemidjiense (strain ATCC BAA-1014 / DSM 16622 / JCM 12645 / Bem) (Geobacter bemidjiensis) protein is Small ribosomal subunit protein bS18.